A 358-amino-acid polypeptide reads, in one-letter code: Dynein axonemal assembly factor 10 (358 aa).

WD repeat units lie at residues 64–106 (EKPK…TPVY), 116–155 (NCID…TPVA), 163–206 (EAKR…VRWE), 208–250 (NIKN…PTKG), 258–298 (AHKS…QRSR), and 320–358 (LSTQ…LNRL).

Interacts with PIH1D1; the interaction associates DNAAF10 with the R2TP complex. Interacts with several dynein axonemal assembly factors.

The protein resides in the dynein axonemal particle. Functionally, key assembly factor specifically required for the stability of axonemal dynein heavy chains in cytoplasm. The sequence is that of Dynein axonemal assembly factor 10 (dnaaf10) from Xenopus laevis (African clawed frog).